Consider the following 141-residue polypeptide: Antifungal protein ginkbilobin-like protein 1 (141 aa).

The first 32 residues, 1-32 (MSISSKFQLRSSTSLLLLVALMVVMGMDGAAA), serve as a signal peptide directing secretion. Residues 36–141 (TNFVSSACNT…CFIQYEQHSF (106 aa)) form the Gnk2-homologous domain. Cystine bridges form between C43–C119, C95–C104, and C107–C132. N44 is an alpha-D-mannopyranose binding site. R126 and E137 together coordinate alpha-D-mannopyranose.

Its function is as follows. Exerts antifungal activity through its carbohydrate-binding specificity. The polypeptide is Antifungal protein ginkbilobin-like protein 1 (Picea glauca (White spruce)).